A 76-amino-acid chain; its full sequence is Large ribosomal subunit protein bL31 (76 aa).

4 residues coordinate Zn(2+): cysteine 16, cysteine 18, cysteine 36, and cysteine 39.

The protein belongs to the bacterial ribosomal protein bL31 family. Type A subfamily. As to quaternary structure, part of the 50S ribosomal subunit. The cofactor is Zn(2+).

Its function is as follows. Binds the 23S rRNA. The sequence is that of Large ribosomal subunit protein bL31 from Syntrophobacter fumaroxidans (strain DSM 10017 / MPOB).